The chain runs to 278 residues: SLAM family member 8 (278 aa).

Positions 1 to 20 (MWSLWSLLLFEALLPVVVVS) are cleaved as a signal peptide. Topologically, residues 21-231 (VQVLSKVGDS…AASGKASYKD (211 aa)) are extracellular. 2 N-linked (GlcNAc...) asparagine glycosylation sites follow: Asn-83 and Asn-154. The Ig-like C2-type domain maps to 126–213 (PEVQVFTAAA…PVSWDMTTVT (88 aa)). A disulfide bridge links Cys-150 with Cys-199. The chain crosses the membrane as a helical span at residues 232–252 (VLLVVVPITLFLILAGLFGAW). Topologically, residues 253–278 (HHGLCSGKKKDACTDGVLPETENALV) are cytoplasmic.

It is found in the membrane. Its function is as follows. May play a role in B-lineage commitment and/or modulation of signaling through the B-cell receptor. The protein is SLAM family member 8 (Slamf8) of Mus musculus (Mouse).